The following is a 292-amino-acid chain: tRNA-cytidine(32) 2-sulfurtransferase (292 aa).

The short motif at 53–58 is the PP-loop motif element; that stretch reads SGGKDS. The [4Fe-4S] cluster site is built by Cys-128, Cys-131, and Cys-219.

Belongs to the TtcA family. As to quaternary structure, homodimer. It depends on Mg(2+) as a cofactor. Requires [4Fe-4S] cluster as cofactor.

It localises to the cytoplasm. The enzyme catalyses cytidine(32) in tRNA + S-sulfanyl-L-cysteinyl-[cysteine desulfurase] + AH2 + ATP = 2-thiocytidine(32) in tRNA + L-cysteinyl-[cysteine desulfurase] + A + AMP + diphosphate + H(+). It functions in the pathway tRNA modification. Its function is as follows. Catalyzes the ATP-dependent 2-thiolation of cytidine in position 32 of tRNA, to form 2-thiocytidine (s(2)C32). The sulfur atoms are provided by the cysteine/cysteine desulfurase (IscS) system. The protein is tRNA-cytidine(32) 2-sulfurtransferase of Cereibacter sphaeroides (strain ATCC 17023 / DSM 158 / JCM 6121 / CCUG 31486 / LMG 2827 / NBRC 12203 / NCIMB 8253 / ATH 2.4.1.) (Rhodobacter sphaeroides).